A 192-amino-acid polypeptide reads, in one-letter code: Secreted and transmembrane protein 1A (192 aa).

Positions 1–27 are cleaved as a signal peptide; that stretch reads MMTCPSVPAIPTLWLFSILLLVVSLNA. Residues 28-165 lie on the Extracellular side of the membrane; it reads QNKSWDNPIC…SSPIEGKPGT (138 aa). Residues asparagine 29, asparagine 55, asparagine 84, and asparagine 127 are each glycosylated (N-linked (GlcNAc...) asparagine). The helical transmembrane segment at 166–186 threads the bilayer; that stretch reads LVGVITVIFILGVAGFITFIY. Residues 187–192 are Cytoplasmic-facing; that stretch reads YRHRRS.

The protein belongs to the SECTM family.

It localises to the cell membrane. Its subcellular location is the secreted. The sequence is that of Secreted and transmembrane protein 1A from Mus musculus (Mouse).